The sequence spans 329 residues: Arylacetonitrilase (329 aa).

Positions 6-279 constitute a CN hydrolase domain; that stretch reads VRVAVTQAEP…EGIVYANLDM (274 aa). Glu46 (proton acceptor) is an active-site residue. Residue Lys126 is part of the active site. Cys161 serves as the catalytic Nucleophile.

This sequence belongs to the carbon-nitrogen hydrolase superfamily. Nitrilase family.

The enzyme catalyses a nitrile + 2 H2O = a carboxylate + NH4(+). The catalysed reaction is 4-chlorophenylacetonitrile + 2 H2O = 4-chlorophenylacetate + NH4(+). In terms of biological role, nitrilase that hydrolyzes preferentially phenylacetonitrile and heteroaromatic nitriles, but has significantly lower activity for (R,S)-mandelonitrile. Also acts on dinitriles like phenylenediacetonitriles (PDAs) 1,2-PDA, 1,3-PDA, and 1,4-PDA, and cyanophenyl acetonitriles (CPAs) 2-CPA and 4-CPA. This chain is Arylacetonitrilase, found in Hypocrea virens (strain Gv29-8 / FGSC 10586) (Gliocladium virens).